Consider the following 338-residue polypeptide: Glyceraldehyde-3-phosphate dehydrogenase 2 (338 aa).

NAD(+) contacts are provided by residues 13 to 14 (RI), Asp35, and Arg80. D-glyceraldehyde 3-phosphate is bound by residues 151-153 (SCT), Thr182, 211-212 (TG), and Arg234. Cys152 (nucleophile) is an active-site residue. Asn316 serves as a coordination point for NAD(+).

This sequence belongs to the glyceraldehyde-3-phosphate dehydrogenase family. In terms of assembly, homotetramer.

The protein localises to the cytoplasm. It carries out the reaction D-glyceraldehyde 3-phosphate + phosphate + NAD(+) = (2R)-3-phospho-glyceroyl phosphate + NADH + H(+). It participates in carbohydrate degradation; glycolysis; pyruvate from D-glyceraldehyde 3-phosphate: step 1/5. Inhibited by koningic acid through the interaction of cysteine residues with koningic acid even at very low concentrations. The protein is Glyceraldehyde-3-phosphate dehydrogenase 2 (gpd2) of Trichoderma koningii (Hypocrea koningii).